Here is a 743-residue protein sequence, read N- to C-terminus: MKIGSPSSPILSVVSSSGSLDPKISGSLGSRILPATQRSSPSENLLLHRKMSSNSLRHVESMSQLPSGAGKISQLNAVVLGESLASEENDLVFPSKEFSGQALVSSPQQYMEMHKRSMDDPAAFWSDIASEFYWKQKWGDQVFSENLDVRKGPISIEWFKGGITNICYNCLDKNVEAGLGDKTAIHWEGNELGVDASLTYSELLQRVCQLANYLKDNGVKKGDAVVIYLPMLMELPIAMLACARIGAVHSVVFAGFSADSLAQRIVDCKPNVILTCNAVKRGPKTINLKAIVDAALDQSSKDGVSVGICLTYDNSLATTRENTKWQNGRDVWWQDVISQYPTSCEVEWVDAEDPLFLLYTSGSTGKPKGVLHTTGGYMIYTATTFKYAFDYKSTDVYWCTADCGWITGHSYVTYGPMLNGATVVVFEGAPNYPDPGRCWDIVDKYKVSIFYTAPTLVRSLMRDDDKFVTRHSRKSLRVLGSVGEPINPSAWRWFFNVVGDSRCPISDTWWQTETGGFMITPLPGAWPQKPGSATFPFFGVQPVIVDEKGNEIEGECSGYLCVKGSWPGAFRTLFGDHERYETTYFKPFAGYYFSGDGCSRDKDGYYWLTGRVDDVINVSGHRIGTAEVESALVLHPQCAEAAVVGIEHEVKGQGIYAFVTLLEGVPYSEELRKSLVLMVRNQIGAFAAPDRIHWAPGLPKTRSGKIMRRILRKIASRQLEELGDTSTLADPSVVDQLIALADV.

A chloroplast-targeting transit peptide spans 1–84 (MKIGSPSSPI…LNAVVLGESL (84 aa)). Aspartate 613 is a catalytic residue.

The protein belongs to the ATP-dependent AMP-binding enzyme family. Expressed in leaves, flower buds and young flowers.

The protein resides in the plastid. It localises to the chloroplast. It is found in the glyoxysome. The catalysed reaction is acetate + ATP + CoA = acetyl-CoA + AMP + diphosphate. Its function is as follows. Catalyzes the production of acetyl-CoA, an activated form of acetate that can be used for lipid synthesis or for energy generation. May play a limited role in the biosynthesis of lipids. The polypeptide is Acetyl-coenzyme A synthetase, chloroplastic/glyoxysomal (ACS) (Arabidopsis thaliana (Mouse-ear cress)).